A 202-amino-acid chain; its full sequence is Putative pre-16S rRNA nuclease (202 aa).

Disordered regions lie at residues 1-27 (MSGSGSRPGDSRPGDSRPGDSRPGVRI) and 170-202 (GCAAPAAGPDGVVRAPRDGPRAPDGVVPPSDER). Residues 9 to 20 (GDSRPGDSRPGD) are compositionally biased toward basic and acidic residues.

This sequence belongs to the YqgF nuclease family.

The protein resides in the cytoplasm. Functionally, could be a nuclease involved in processing of the 5'-end of pre-16S rRNA. This chain is Putative pre-16S rRNA nuclease, found in Frankia casuarinae (strain DSM 45818 / CECT 9043 / HFP020203 / CcI3).